The primary structure comprises 334 residues: Dual specificity mitogen-activated protein kinase kinase 6 (334 aa).

The span at 1–11 shows a compositional bias: basic residues; it reads MSQSKGKKRNP. A disordered region spans residues 1–34; sequence MSQSKGKKRNPGLKIPKEAFEQPQTSSTPPRDLD. Positions 4–19 are d domain; sequence SKGKKRNPGLKIPKEA. The Protein kinase domain occupies 53-314; sequence LEPIVELGRG…YPELMQHPFF (262 aa). ATP contacts are provided by residues 59–67 and lysine 82; that span reads LGRGAYGVV. Aspartate 179 serves as the catalytic Proton acceptor. Serine 207 bears the Phosphoserine; by MAPK3 mark. At threonine 211 the chain carries Phosphothreonine; by MAPK3. The segment at 311–334 is DVD domain; it reads HPFFTVHESKAADVASFVKLILGD.

Belongs to the protein kinase superfamily. STE Ser/Thr protein kinase family. MAP kinase kinase subfamily. Dimer. Interacts (via its D domain) with its substrates MAPK11, MAPK12, MAPK13 and MAPK14. Interacts (via its DVD domain) with MAP3Ks activators like MAP3K5/ASK1, MAP3K1/MEKK1, MAP3K2/MEKK2, MAP3K3/MEKK3, MAP3K4/MEKK4, MAP3K7/TAK1, MAP3K11/MLK3 and MAP3K17/TAOK2. Interacts with DCTN1. Interacts with EIF2AK2/PKR. In terms of processing, weakly autophosphorylated. Phosphorylated at Ser-207 and Thr-211 by the majority of M3Ks, such as MAP3K5/ASK1, MAP3K1/MEKK1, MAP3K2/MEKK2, MAP3K3/MEKK3, MAP3K4/MEKK4, MAP3K7/TAK1, MAP3K11/MLK3 and MAP3K17/TAOK2. Post-translationally, in response to genotoxic stress, MAP3K-phosphorylated MAP2K6 is ubiquitinated and degraded by the SCF(FBXO31) complex.

It is found in the nucleus. Its subcellular location is the cytoplasm. It localises to the cytoskeleton. The enzyme catalyses L-seryl-[protein] + ATP = O-phospho-L-seryl-[protein] + ADP + H(+). The catalysed reaction is L-threonyl-[protein] + ATP = O-phospho-L-threonyl-[protein] + ADP + H(+). It catalyses the reaction L-tyrosyl-[protein] + ATP = O-phospho-L-tyrosyl-[protein] + ADP + H(+). With respect to regulation, activated by dual phosphorylation on Ser-207 and Thr-211 in response to a variety of cellular stresses, including UV radiation, osmotic shock, hypoxia, inflammatory cytokines, interferon gamma (IFNG), and less often by growth factors. MAP2K6/MKK6 is activated by the majority of M3Ks, such as MAP3K5/ASK1, MAP3K1/MEKK1, MAP3K2/MEKK2, MAP3K3/MEKK3, MAP3K4/MEKK4, MAP3K7/TAK1, MAP3K11/MLK3 and MAP3K17/TAOK2. Dual specificity protein kinase which acts as an essential component of the MAP kinase signal transduction pathway. With MAP3K3/MKK3, catalyzes the concomitant phosphorylation of a threonine and a tyrosine residue in the MAP kinases p38 MAPK11, MAPK12, MAPK13 and MAPK14 and plays an important role in the regulation of cellular responses to cytokines and all kinds of stresses. Especially, MAP2K3/MKK3 and MAP2K6/MKK6 are both essential for the activation of MAPK11 and MAPK13 induced by environmental stress, whereas MAP2K6/MKK6 is the major MAPK11 activator in response to TNF. MAP2K6/MKK6 also phosphorylates and activates PAK6. The p38 MAP kinase signal transduction pathway leads to direct activation of transcription factors. Nuclear targets of p38 MAP kinase include the transcription factors ATF2 and ELK1. Within the p38 MAPK signal transduction pathway, MAP3K6/MKK6 mediates phosphorylation of STAT4 through MAPK14 activation, and is therefore required for STAT4 activation and STAT4-regulated gene expression in response to IL-12 stimulation. The pathway is also crucial for IL-6-induced SOCS3 expression and down-regulation of IL-6-mediated gene induction; and for IFNG-dependent gene transcription. Has a role in osteoclast differentiation through NF-kappa-B transactivation by TNFSF11, and in endochondral ossification and since SOX9 is another likely downstream target of the p38 MAPK pathway. MAP2K6/MKK6 mediates apoptotic cell death in thymocytes. Acts also as a regulator for melanocytes dendricity, through the modulation of Rho family GTPases. In Mus musculus (Mouse), this protein is Dual specificity mitogen-activated protein kinase kinase 6 (Map2k6).